Consider the following 712-residue polypeptide: Glycine--tRNA ligase beta subunit (712 aa).

The protein belongs to the class-II aminoacyl-tRNA synthetase family. As to quaternary structure, tetramer of two alpha and two beta subunits.

The protein localises to the cytoplasm. The enzyme catalyses tRNA(Gly) + glycine + ATP = glycyl-tRNA(Gly) + AMP + diphosphate. This chain is Glycine--tRNA ligase beta subunit, found in Acaryochloris marina (strain MBIC 11017).